The primary structure comprises 205 residues: Ribonuclease HII (205 aa).

Positions 16–205 (VSEVGIDEVG…KSFLNQSDLI (190 aa)) constitute an RNase H type-2 domain. 3 residues coordinate a divalent metal cation: aspartate 22, glutamate 23, and aspartate 118.

This sequence belongs to the RNase HII family. The cofactor is Mn(2+). It depends on Mg(2+) as a cofactor.

It is found in the cytoplasm. The enzyme catalyses Endonucleolytic cleavage to 5'-phosphomonoester.. Endonuclease that specifically degrades the RNA of RNA-DNA hybrids. The protein is Ribonuclease HII of Prochlorococcus marinus (strain MIT 9312).